Consider the following 502-residue polypeptide: Mannitol 2-dehydrogenase (502 aa).

37–48 lines the NAD(+) pocket; sequence IVHIGVGGFHRA.

The protein belongs to the mannitol dehydrogenase family. In terms of assembly, monomer.

The catalysed reaction is D-mannitol + NAD(+) = D-fructose + NADH + H(+). Catalyzes the NAD(H)-dependent interconversion of D-fructose and D-mannitol in the mannitol metabolic pathway. The sequence is that of Mannitol 2-dehydrogenase from Emericella nidulans (strain FGSC A4 / ATCC 38163 / CBS 112.46 / NRRL 194 / M139) (Aspergillus nidulans).